A 112-amino-acid polypeptide reads, in one-letter code: Keratin-associated protein 12-4 (112 aa).

15 consecutive repeat copies span residues 10–14 (CPMAC), 20–24 (CVPST), 25–29 (CYPPE), 35–39 (CCCSA), 41–45 (CVALL), 46–50 (CRPLC), 56–60 (CQPAC), 61–65 (CVPSP), 66–70 (CQVAC), 71–75 (CVPVS), 76–80 (CKPVL), 81–85 (CVASF), 86–90 (CPTSG), 91–95 (CCQPF), and 96–100 (CPTLV). The tract at residues 10–100 (CPMACPGSPC…CCQPFCPTLV (91 aa)) is 15 X 5 AA approximate repeats.

The protein belongs to the KRTAP type 12 family. As to quaternary structure, interacts with hair keratins. Restricted to a narrow region of the hair fiber cuticle, lying approximately 20 cell layers above the apex of the dermal papilla of the hair root; not detected in any other tissues.

Functionally, in the hair cortex, hair keratin intermediate filaments are embedded in an interfilamentous matrix, consisting of hair keratin-associated proteins (KRTAP), which are essential for the formation of a rigid and resistant hair shaft through their extensive disulfide bond cross-linking with abundant cysteine residues of hair keratins. The matrix proteins include the high-sulfur and high-glycine-tyrosine keratins. The polypeptide is Keratin-associated protein 12-4 (KRTAP12-4) (Homo sapiens (Human)).